We begin with the raw amino-acid sequence, 311 residues long: Nudix hydrolase 9 (311 aa).

One can recognise a Nudix hydrolase domain in the interval 131–298 (SSPLGNGAVI…GFALYELMLQ (168 aa)). Positions 192–213 (LNKKVTQEMFDSIICEVVEETG) match the Nudix box motif. Mg(2+) is bound by residues Glu-207 and Glu-211.

This sequence belongs to the Nudix hydrolase family. The cofactor is Mg(2+). Mn(2+) serves as cofactor. Expressed in roots, stems and leaves.

Probably mediates the hydrolysis of some nucleoside diphosphate derivatives. The polypeptide is Nudix hydrolase 9 (NUDT9) (Arabidopsis thaliana (Mouse-ear cress)).